The following is a 62-amino-acid chain: Small ribosomal subunit protein eS27 (62 aa).

Zn(2+)-binding residues include Cys-17, Cys-20, Cys-36, and Cys-39. The segment at 17 to 39 (CPDCENEQIIFEKASTVVDCVVC) adopts a C4-type zinc-finger fold.

It belongs to the eukaryotic ribosomal protein eS27 family. As to quaternary structure, part of the 30S ribosomal subunit. Requires Zn(2+) as cofactor.

The sequence is that of Small ribosomal subunit protein eS27 from Methanosphaerula palustris (strain ATCC BAA-1556 / DSM 19958 / E1-9c).